Here is a 593-residue protein sequence, read N- to C-terminus: Auxin response factor 12 (593 aa).

Residues 126 to 228 (FTKVLTASDT…ELRVGIRRAR (103 aa)) constitute a DNA-binding region (TF-B3). Positions 511 to 592 (RTCTKVQMQG…MVKKIFIQKR (82 aa)) constitute a PB1 domain.

This sequence belongs to the ARF family. In terms of assembly, homodimers and heterodimers.

The protein localises to the nucleus. In terms of biological role, auxin response factors (ARFs) are transcriptional factors that bind specifically to the DNA sequence 5'-TGTCTC-3' found in the auxin-responsive promoter elements (AuxREs). Could act as transcriptional activator or repressor. Formation of heterodimers with Aux/IAA proteins may alter their ability to modulate early auxin response genes expression. The chain is Auxin response factor 12 (ARF12) from Arabidopsis thaliana (Mouse-ear cress).